The chain runs to 605 residues: Ankyrin repeat domain-containing protein 13D (605 aa).

UIM domains follow at residues 482-501 (EDDDLLQFAIQQSLLEAGTE) and 528-547 (EEQLQLEQALQESLQLSTES). Residues 538–554 (QESLQLSTESRGPESPQ) show a composition bias toward low complexity. The interval 538–605 (QESLQLSTES…RILQLSLTEH (68 aa)) is disordered. The residue at position 552 (S552) is a Phosphoserine. T556 bears the Phosphothreonine mark. Positions 564–575 (SFEEQLRLALEL) are enriched in low complexity. 2 UIM domains span residues 564–583 (SFEEQLRLALELSSREQEEL) and 589–605 (QEEDDLQRILQLSLTEH). Positions 576 to 589 (SSREQEELERRGQQ) are enriched in basic and acidic residues.

Interacts with EGFR (ubiquitinated); the interaction is direct and may regulate EGFR internalization.

The protein localises to the cell membrane. It is found in the late endosome. Functionally, ubiquitin-binding protein that specifically recognizes and binds 'Lys-63'-linked ubiquitin. Does not bind 'Lys-48'-linked ubiquitin. Positively regulates the internalization of ligand-activated EGFR by binding to the Ub moiety of ubiquitinated EGFR at the cell membrane. This chain is Ankyrin repeat domain-containing protein 13D (Ankrd13d), found in Mus musculus (Mouse).